The sequence spans 471 residues: Probable lysophospholipase BODYGUARD 2 (471 aa).

The first 45 residues, 1 to 45 (MGIARWLNRTVGFFVFALLDIADFLLCYTYKTLDYFLESERKPCY), serve as a signal peptide directing secretion. A lipid anchor (N-palmitoyl cysteine) is attached at cysteine 46. An AB hydrolase-1 domain is found at 193–296 (VVFIHGFVSS…AIKSLTLLAP (104 aa)). Histidine 197 is a catalytic residue. Serine 271 acts as the Nucleophile in catalysis. Catalysis depends on charge relay system residues aspartate 418 and histidine 446.

It localises to the cell membrane. The protein resides in the secreted. The protein localises to the cell wall. In terms of biological role, involved in cuticle development and morphogenesis. This Arabidopsis thaliana (Mouse-ear cress) protein is Probable lysophospholipase BODYGUARD 2.